The sequence spans 984 residues: Translation initiation factor IF-2 (984 aa).

The interval 32-402 (PAKNATSTLT…TQPQRAAKRK (371 aa)) is disordered. Low complexity predominate over residues 89 to 123 (PAETEAQASPAQPEAKAAAPAAEAEEAPAAKPAPA). Residues 126 to 136 (RKAEARTEAPR) are compositionally biased toward basic and acidic residues. Low complexity-rich tracts occupy residues 154–172 (APET…SAAP) and 187–197 (AETTESAPAEP). Residues 198 to 220 (AAEKAPAEKRRYEVSMEPEKDSV) are compositionally biased toward basic and acidic residues. The segment covering 255–270 (RPDPAAVQAQAAAAAQ) has biased composition (low complexity). Positions 271 to 283 (AREERAERPDRGP) are enriched in basic and acidic residues. Residues 308-334 (GRPAPRSGAPRPGGARPAAGFGQPAQA) are compositionally biased toward low complexity. The 170-residue stretch at 482-651 (PRPPVVTIMG…ALQAEVLELK (170 aa)) folds into the tr-type G domain. The G1 stretch occupies residues 491 to 498 (GHVDHGKT). 491–498 (GHVDHGKT) contributes to the GTP binding site. The interval 516-520 (GITQH) is G2. The tract at residues 537-540 (DTPG) is G3. Residues 537–541 (DTPGH) and 591–594 (NKID) contribute to the GTP site. Positions 591–594 (NKID) are G4. The interval 627-629 (SAK) is G5.

The protein belongs to the TRAFAC class translation factor GTPase superfamily. Classic translation factor GTPase family. IF-2 subfamily.

The protein resides in the cytoplasm. Its function is as follows. One of the essential components for the initiation of protein synthesis. Protects formylmethionyl-tRNA from spontaneous hydrolysis and promotes its binding to the 30S ribosomal subunits. Also involved in the hydrolysis of GTP during the formation of the 70S ribosomal complex. The polypeptide is Translation initiation factor IF-2 (Oleidesulfovibrio alaskensis (strain ATCC BAA-1058 / DSM 17464 / G20) (Desulfovibrio alaskensis)).